The primary structure comprises 103 residues: Small ribosomal subunit protein uS10 (103 aa).

This sequence belongs to the universal ribosomal protein uS10 family. As to quaternary structure, part of the 30S ribosomal subunit.

In terms of biological role, involved in the binding of tRNA to the ribosomes. The sequence is that of Small ribosomal subunit protein uS10 from Acetivibrio thermocellus (strain ATCC 27405 / DSM 1237 / JCM 9322 / NBRC 103400 / NCIMB 10682 / NRRL B-4536 / VPI 7372) (Clostridium thermocellum).